The following is a 595-amino-acid chain: Protein alan shepard (595 aa).

The segment covering 1–12 (MHPRYSPAPPPH) has biased composition (pro residues). Residues 1-82 (MHPRYSPAPP…ASVAAAPPTP (82 aa)) form a disordered region. Y5 is subject to Phosphotyrosine. Over residues 13–31 (QQQQQQQQQPMGGPHQQQS) the composition is skewed to low complexity. Residues 32 to 43 (AGGGPGHGGGAS) are compositionally biased toward gly residues. The span at 50-68 (PNSQQLPPQMPRSQNYANG) shows a compositional bias: polar residues. Positions 69–78 (SSSAASVAAA) are enriched in low complexity. Y138 and Y154 each carry phosphotyrosine. The interval 184-238 (RVPTAASPSNTNSSSSSNTGSQSGTLSTSLSNTTNTNTTMGPNGTAQNQNQQGGE) is disordered. The span at 190–238 (SPSNTNSSSSSNTGSQSGTLSTSLSNTTNTNTTMGPNGTAQNQNQQGGE) shows a compositional bias: low complexity. 2 RRM domains span residues 243–316 (TNLY…MAKQ) and 322–401 (TNLY…FADG). Positions 569 to 595 (MTDSEQASTAASPDEAYTQYPHQAAPK) are disordered.

In terms of biological role, has a role in the perception of gravity. The sequence is that of Protein alan shepard from Drosophila virilis (Fruit fly).